A 433-amino-acid chain; its full sequence is MIKYRNSSIHIQSVRGMHDCLPKDVIQWQYIEDVLKTILNGYGYNEIRFPIIECTDLFKRSIGEVTDVVEKEMYTFIDQHGNDLTLRPEGTSGCVRAGIENSLFYHQEPRLWYMGPMFRRERPQKGRYRQFHQFSAEAFGCVGPDIDVELILITNRCWKELGISNYLTLELNSIGLLSSRMIYRKKLISFLEKNKHNLDDSSKRRLYSNPMRILDTKNVKIKELLAHAPVLSDYLDDCSKNHFLNLCRLLDIANVTYIVNPYLVRGLDYYNRTVFEWVTDKLGVKKTICAGGRYDDLIKQLGGGSIPAVGFAIGLERVVLLMKLIKSSIINTRNVYIDVYLIRLGTYYQEYSIKLSEHIREKLPFLRLMVDCGGGNFKQQIDRAEKNNSRFVIVVDDKNFFEQTIILKELQSKKQEILKYDEIILKLRKIYNM.

Belongs to the class-II aminoacyl-tRNA synthetase family. As to quaternary structure, homodimer.

It is found in the cytoplasm. The catalysed reaction is tRNA(His) + L-histidine + ATP = L-histidyl-tRNA(His) + AMP + diphosphate + H(+). The protein is Histidine--tRNA ligase of Blochmanniella floridana.